Consider the following 435-residue polypeptide: Serine/threonine-protein kinase 40 (435 aa).

The region spanning 35 to 332 (FVLGPRLGNS…DVLEALSAII (298 aa)) is the Protein kinase domain. Residues 41–49 (LGNSPVPSI) and lysine 66 each bind ATP. Aspartate 197 (proton acceptor) is an active-site residue.

The protein belongs to the protein kinase superfamily. CAMK Ser/Thr protein kinase family.

It localises to the nucleus. The protein resides in the cytoplasm. The catalysed reaction is L-seryl-[protein] + ATP = O-phospho-L-seryl-[protein] + ADP + H(+). The enzyme catalyses L-threonyl-[protein] + ATP = O-phospho-L-threonyl-[protein] + ADP + H(+). In terms of biological role, may be a negative regulator of NF-kappa-B and p53-mediated gene transcription. This Mus musculus (Mouse) protein is Serine/threonine-protein kinase 40 (Stk40).